A 211-amino-acid polypeptide reads, in one-letter code: Dephospho-CoA kinase (211 aa).

Positions I2 to K204 constitute a DPCK domain. G10–T15 serves as a coordination point for ATP.

The protein belongs to the CoaE family.

Its subcellular location is the cytoplasm. The catalysed reaction is 3'-dephospho-CoA + ATP = ADP + CoA + H(+). Its pathway is cofactor biosynthesis; coenzyme A biosynthesis; CoA from (R)-pantothenate: step 5/5. Catalyzes the phosphorylation of the 3'-hydroxyl group of dephosphocoenzyme A to form coenzyme A. In Rhodospirillum rubrum (strain ATCC 11170 / ATH 1.1.1 / DSM 467 / LMG 4362 / NCIMB 8255 / S1), this protein is Dephospho-CoA kinase.